The primary structure comprises 305 residues: Probable L-ribulose-5-phosphate 3-epimerase UlaE (305 aa).

It belongs to the L-ribulose-5-phosphate 3-epimerase family.

The catalysed reaction is L-ribulose 5-phosphate = L-xylulose 5-phosphate. Its pathway is cofactor degradation; L-ascorbate degradation; D-xylulose 5-phosphate from L-ascorbate: step 3/4. Its function is as follows. Catalyzes the isomerization of L-xylulose-5-phosphate to L-ribulose-5-phosphate. Is involved in the anaerobic L-ascorbate utilization. In Mycoplasma pneumoniae (strain ATCC 29342 / M129 / Subtype 1) (Mycoplasmoides pneumoniae), this protein is Probable L-ribulose-5-phosphate 3-epimerase UlaE (ulaE).